A 216-amino-acid chain; its full sequence is Protein-methionine-sulfoxide reductase heme-binding subunit MsrQ (216 aa).

Transmembrane regions (helical) follow at residues 16 to 36 (IWAL…LGAT), 48 to 68 (EHLL…ITPI), 82 to 102 (ALGL…MVLD), 119 to 139 (FITI…TSNI), and 155 to 175 (LVYV…KVVG).

It belongs to the MsrQ family. Heterodimer of a catalytic subunit (MsrP) and a heme-binding subunit (MsrQ). FMN serves as cofactor. The cofactor is heme b.

It is found in the cell inner membrane. Its function is as follows. Part of the MsrPQ system that repairs oxidized periplasmic proteins containing methionine sulfoxide residues (Met-O), using respiratory chain electrons. Thus protects these proteins from oxidative-stress damage caused by reactive species of oxygen and chlorine generated by the host defense mechanisms. MsrPQ is essential for the maintenance of envelope integrity under bleach stress, rescuing a wide series of structurally unrelated periplasmic proteins from methionine oxidation. MsrQ provides electrons for reduction to the reductase catalytic subunit MsrP, using the quinone pool of the respiratory chain. The protein is Protein-methionine-sulfoxide reductase heme-binding subunit MsrQ of Rhizobium meliloti (strain 1021) (Ensifer meliloti).